The sequence spans 196 residues: ATP-dependent Clp protease proteolytic subunit (196 aa).

Ser98 serves as the catalytic Nucleophile. His123 is an active-site residue.

It belongs to the peptidase S14 family. In terms of assembly, fourteen ClpP subunits assemble into 2 heptameric rings which stack back to back to give a disk-like structure with a central cavity, resembling the structure of eukaryotic proteasomes.

Its subcellular location is the cytoplasm. It catalyses the reaction Hydrolysis of proteins to small peptides in the presence of ATP and magnesium. alpha-casein is the usual test substrate. In the absence of ATP, only oligopeptides shorter than five residues are hydrolyzed (such as succinyl-Leu-Tyr-|-NHMec, and Leu-Tyr-Leu-|-Tyr-Trp, in which cleavage of the -Tyr-|-Leu- and -Tyr-|-Trp bonds also occurs).. Functionally, cleaves peptides in various proteins in a process that requires ATP hydrolysis. Has a chymotrypsin-like activity. Plays a major role in the degradation of misfolded proteins. This chain is ATP-dependent Clp protease proteolytic subunit, found in Sulfurimonas denitrificans (strain ATCC 33889 / DSM 1251) (Thiomicrospira denitrificans (strain ATCC 33889 / DSM 1251)).